The following is a 276-amino-acid chain: Flagellin FljJ (276 aa).

The tract at residues 51–80 is disordered; the sequence is RPGAGDMSGLAREDEPGSGDIDRGRGPRAG. The span at 61 to 75 shows a compositional bias: basic and acidic residues; the sequence is AREDEPGSGDIDRGR.

This sequence belongs to the bacterial flagellin family. In C.crescentus, the flagellar filament is composed of multiple flagellins of 29 kDa; 27 kDa and 25 kDa.

It localises to the secreted. Its subcellular location is the bacterial flagellum. Flagellin is the subunit protein which polymerizes to form the filaments of bacterial flagella. The protein is Flagellin FljJ (fljJ) of Caulobacter vibrioides (strain ATCC 19089 / CIP 103742 / CB 15) (Caulobacter crescentus).